Consider the following 152-residue polypeptide: MFRGATMVNLDSKGRLAVPTRYRESLNEESQGQMVCTIDLHQPCLLLYPLPEWEIIEQKLSRLSSMNPAERRVQRLLLGHASECQMDGAGRLLIAGTLRQHAGLNKEVMLVGQFNKFELWDEQTWYQQVKDDIDAEQSTQEPLSERLQGLSL.

SpoVT-AbrB domains follow at residues 5 to 52 (ATMV…PLPE) and 81 to 124 (ASEC…DEQT).

The protein belongs to the MraZ family. In terms of assembly, forms oligomers.

The protein resides in the cytoplasm. Its subcellular location is the nucleoid. Functionally, negatively regulates its own expression and that of the subsequent genes in the proximal part of the division and cell wall (dcw) gene cluster. Acts by binding directly to DNA. May also regulate the expression of genes outside the dcw cluster. In Yersinia pestis bv. Antiqua (strain Antiqua), this protein is Transcriptional regulator MraZ.